A 570-amino-acid chain; its full sequence is GTPase Obg (570 aa).

In terms of domain architecture, Obg spans 2-168; sequence SDFVDRVTVH…RDIILELKSI (167 aa). The segment at 15–43 is disordered; sequence GDGGNGSAGIRREKYKPLAGPNGGNGGKG. The OBG-type G domain maps to 169-349; that stretch reads ADVALVGFPS…LNFALAKLVK (181 aa). Residues 175–182, 200–204, 221–224, 301–304, and 330–332 contribute to the GTP site; these read GFPSAGKS, FTTLV, DVPG, NKID, and STA. The Mg(2+) site is built by serine 182 and threonine 202. Residues 382–468 enclose the OCT domain; it reads GRNAQVREFE…ERAVAFDWDP (87 aa). Residues 521–570 are disordered; that stretch reads RAAMQAERAAGHWADPSIDDDRHDEQSLFGRGEVEEYEDEPGADGSRQLD.

This sequence belongs to the TRAFAC class OBG-HflX-like GTPase superfamily. OBG GTPase family. Monomer. Requires Mg(2+) as cofactor.

It is found in the cytoplasm. An essential GTPase which binds GTP, GDP and possibly (p)ppGpp with moderate affinity, with high nucleotide exchange rates and a fairly low GTP hydrolysis rate. Plays a role in control of the cell cycle, stress response, ribosome biogenesis and in those bacteria that undergo differentiation, in morphogenesis control. The sequence is that of GTPase Obg from Bifidobacterium animalis subsp. lactis (strain AD011).